We begin with the raw amino-acid sequence, 232 residues long: Vesicle transport through interaction with t-SNAREs homolog 1B (232 aa).

A2 is modified (N-acetylalanine). 2 interaction with CLINT1 regions span residues 2–23 (ASSAASSEHFEKLHEIFRGLHE) and 69–73 (APLSF). Residues 2-208 (ASSAASSEHF…SRKVTTNKLL (207 aa)) are Cytoplasmic-facing. Residues 35-98 (TAGTEEKKKL…AKLHREVRST (64 aa)) are a coiled coil. The residue at position 103 (T103) is a Phosphothreonine. R107 bears the Omega-N-methylarginine mark. Phosphoserine is present on S138. A coiled-coil region spans residues 161–198 (SEIIEELGEQRDQLERTKSRLVNTSENLSKSRKILRSM). Residues 209–229 (LSIIILLELAILGGLVYYKFF) form a helical; Anchor for type IV membrane protein membrane-spanning segment. Residues 230–232 (RSH) are Vesicular-facing.

This sequence belongs to the VTI1 family. In terms of assembly, forms a SNARE complex with STX7, STX8 and VAMP8 which functions in the homotypic fusion of late endosomes. Component of the SNARE complex composed of STX7, STX8, VAMP7 and VIT1B that is required for heterotypic fusion of late endosomes with lysosomes. May interact with STX17. Interacts with CLINT1. As to expression, expressed in all tissues examined.

The protein localises to the early endosome membrane. It is found in the late endosome membrane. The protein resides in the lysosome membrane. Its subcellular location is the cytoplasmic granule. It localises to the recycling endosome membrane. Functionally, V-SNARE that mediates vesicle transport pathways through interactions with t-SNAREs on the target membrane. These interactions are proposed to mediate aspects of the specificity of vesicle trafficking and to promote fusion of the lipid bilayers. May be concerned with increased secretion of cytokines associated with cellular senescence. The protein is Vesicle transport through interaction with t-SNAREs homolog 1B (VTI1B) of Homo sapiens (Human).